We begin with the raw amino-acid sequence, 271 residues long: Putative pyrimidine-specific ribonucleoside hydrolase RihB (271 aa).

The substrate site is built by Q185 and H197.

This sequence belongs to the IUNH family. RihB subfamily.

The catalysed reaction is a pyrimidine ribonucleoside + H2O = a pyrimidine nucleobase + D-ribose. This is Putative pyrimidine-specific ribonucleoside hydrolase RihB (rihB) from Shigella dysenteriae serotype 1 (strain Sd197).